The primary structure comprises 172 residues: Large ribosomal subunit protein uL10 (172 aa).

The protein belongs to the universal ribosomal protein uL10 family. In terms of assembly, part of the ribosomal stalk of the 50S ribosomal subunit. The N-terminus interacts with L11 and the large rRNA to form the base of the stalk. The C-terminus forms an elongated spine to which L12 dimers bind in a sequential fashion forming a multimeric L10(L12)X complex.

Its function is as follows. Forms part of the ribosomal stalk, playing a central role in the interaction of the ribosome with GTP-bound translation factors. The protein is Large ribosomal subunit protein uL10 of Chlamydia trachomatis serovar A (strain ATCC VR-571B / DSM 19440 / HAR-13).